The sequence spans 80 residues: Serine palmitoyltransferase small subunit A-A (80 aa).

At 1–21 the chain is on the cytoplasmic side; the sequence is MKVLCEDVNGPRSSLGRAWSH. Residues 22-38 traverse the membrane as a helical segment; that stretch reads MSWLYYQYLLVTALYML. At 39–43 the chain is on the lumenal side; it reads EPWER. A helical transmembrane segment spans residues 44–66; sequence TVFNSMLVSIVGMALYTGYIFMP. Topologically, residues 67-80 are cytoplasmic; the sequence is QHILAILHYFEIVQ.

Belongs to the SPTSS family. SPTSSA subfamily. Component of the serine palmitoyltransferase (SPT) complex, which is composed of SPTLC1, SPTLC2 or SPTLC3 and SPTSSA or SPTSSB. The heterodimer consisting of SPTLC1 and SPTLC2/SPTLC3 forms the catalytic core of the enzyme, while SPTSSA or SPTSSB subunits determine substrate specificity. SPT also interacts with ORMDL proteins, especially ORMDL3, which negatively regulate SPT activity in the presence of ceramides.

It localises to the endoplasmic reticulum membrane. The protein operates within lipid metabolism; sphingolipid metabolism. Its function is as follows. Component of the serine palmitoyltransferase multisubunit enzyme (SPT) that catalyzes the initial and rate-limiting step in sphingolipid biosynthesis by condensing L-serine and activated acyl-CoA (most commonly palmitoyl-CoA) to form long-chain bases. The SPT complex is composed of SPTLC1, SPTLC2 or SPTLC3 and SPTSSA or SPTSSB. Within this complex, the heterodimer consisting of SPTLC1 and SPTLC2/SPTLC3 forms the catalytic core. Within the SPT complex, SPTSSA stimulates the catalytic activity and plays a role in substrate specificity, which depends upon the overall complex composition. The SPTLC1-SPTLC2-SPTSSA complex shows a strong preference for C16-CoA substrate, while the SPTLC1-SPTLC3-SPTSSA isozyme uses both C14-CoA and C16-CoA as substrates, with a slight preference for C14-CoA. Independently of its action as a SPT component, may be involved in MBOAT7 localization to mitochondria-associated membranes, a membrane bridge between the endoplasmic reticulum and mitochondria, may hence affect MBOAT7-catalyzed incorporation of arachidonic acid into phosphatidylinositol. In Xenopus laevis (African clawed frog), this protein is Serine palmitoyltransferase small subunit A-A (sptssa-a).